The following is a 160-amino-acid chain: UPF0260 protein GDI1595/Gdia_1801 (160 aa).

It belongs to the UPF0260 family.

This Gluconacetobacter diazotrophicus (strain ATCC 49037 / DSM 5601 / CCUG 37298 / CIP 103539 / LMG 7603 / PAl5) protein is UPF0260 protein GDI1595/Gdia_1801.